Here is a 614-residue protein sequence, read N- to C-terminus: Leucine aminopeptidase 2 (614 aa).

A peptide contacts are provided by residues 139 to 141 and 271 to 276; these read QCQ and PYGGME. His300 provides a ligand contact to Zn(2+). The active-site Proton acceptor is the Glu301. Residues His304 and Glu323 each contribute to the Zn(2+) site. The active-site Proton donor is Tyr385.

Belongs to the peptidase M1 family. Zn(2+) is required as a cofactor.

The protein localises to the cytoplasm. It localises to the nucleus. It carries out the reaction an epoxide + H2O = an ethanediol. Its function is as follows. Aminopeptidase that preferentially cleaves di- and tripeptides. Also has low epoxide hydrolase activity (in vitro). Can hydrolyze the epoxide leukotriene LTA(4) but it forms preferentially 5,6-dihydroxy-7,9,11,14-eicosatetraenoic acid rather than the cytokine leukotriene B(4) as the product compared to the homologous mammalian enzyme (in vitro). The sequence is that of Leucine aminopeptidase 2 from Aspergillus fumigatus (strain ATCC MYA-4609 / CBS 101355 / FGSC A1100 / Af293) (Neosartorya fumigata).